The chain runs to 774 residues: Lon protease 2 (774 aa).

A Lon N-terminal domain is found at 5–198 (YPLMPLRDIV…LLLEILFREL (194 aa)). 350-357 (GPPGVGKT) serves as a coordination point for ATP. Residues 588–769 (RDEVGLATGL…DQVLEQALLS (182 aa)) form the Lon proteolytic domain. Residues S675 and K718 contribute to the active site.

The protein belongs to the peptidase S16 family. Homohexamer. Organized in a ring with a central cavity.

It localises to the cytoplasm. It carries out the reaction Hydrolysis of proteins in presence of ATP.. Its function is as follows. ATP-dependent serine protease that mediates the selective degradation of mutant and abnormal proteins as well as certain short-lived regulatory proteins. Required for cellular homeostasis and for survival from DNA damage and developmental changes induced by stress. Degrades polypeptides processively to yield small peptide fragments that are 5 to 10 amino acids long. Binds to DNA in a double-stranded, site-specific manner. The protein is Lon protease 2 of Desulfotalea psychrophila (strain LSv54 / DSM 12343).